The following is a 450-amino-acid chain: Probable malate:quinone oxidoreductase (450 aa).

This sequence belongs to the MQO family. It depends on FAD as a cofactor.

It carries out the reaction (S)-malate + a quinone = a quinol + oxaloacetate. It functions in the pathway carbohydrate metabolism; tricarboxylic acid cycle; oxaloacetate from (S)-malate (quinone route): step 1/1. The sequence is that of Probable malate:quinone oxidoreductase from Helicobacter pylori (strain P12).